We begin with the raw amino-acid sequence, 562 residues long: Potassium-transporting ATPase potassium-binding subunit (562 aa).

12 consecutive transmembrane segments (helical) span residues 6-26 (FLLI…LGGF), 62-82 (YALA…VLLM), 132-152 (GLTV…FALI), 175-195 (LYVL…QGVL), 253-273 (FVQM…FGQV), 283-303 (LIWA…YAEL), 327-347 (FGIL…CGAV), 356-376 (ALGG…FGGV), 379-399 (GLYG…LMIG), 416-436 (MTAL…ALAL), 483-503 (LLLA…VLAI), and 526-546 (LFIG…FIPA).

It belongs to the KdpA family. As to quaternary structure, the system is composed of three essential subunits: KdpA, KdpB and KdpC.

Its subcellular location is the cell inner membrane. In terms of biological role, part of the high-affinity ATP-driven potassium transport (or Kdp) system, which catalyzes the hydrolysis of ATP coupled with the electrogenic transport of potassium into the cytoplasm. This subunit binds the periplasmic potassium ions and delivers the ions to the membrane domain of KdpB through an intramembrane tunnel. This Yersinia pseudotuberculosis serotype I (strain IP32953) protein is Potassium-transporting ATPase potassium-binding subunit.